We begin with the raw amino-acid sequence, 410 residues long: Multifunctional CCA protein (410 aa).

Residues G8 and R11 each contribute to the ATP site. G8 and R11 together coordinate CTP. 2 residues coordinate Mg(2+): E21 and D23. Residues R91, R137, and R140 each contribute to the ATP site. R91, R137, and R140 together coordinate CTP. One can recognise an HD domain in the interval T228–F329.

This sequence belongs to the tRNA nucleotidyltransferase/poly(A) polymerase family. Bacterial CCA-adding enzyme type 1 subfamily. As to quaternary structure, monomer. Can also form homodimers and oligomers. It depends on Mg(2+) as a cofactor. Ni(2+) serves as cofactor.

The enzyme catalyses a tRNA precursor + 2 CTP + ATP = a tRNA with a 3' CCA end + 3 diphosphate. It carries out the reaction a tRNA with a 3' CCA end + 2 CTP + ATP = a tRNA with a 3' CCACCA end + 3 diphosphate. In terms of biological role, catalyzes the addition and repair of the essential 3'-terminal CCA sequence in tRNAs without using a nucleic acid template. Adds these three nucleotides in the order of C, C, and A to the tRNA nucleotide-73, using CTP and ATP as substrates and producing inorganic pyrophosphate. tRNA 3'-terminal CCA addition is required both for tRNA processing and repair. Also involved in tRNA surveillance by mediating tandem CCA addition to generate a CCACCA at the 3' terminus of unstable tRNAs. While stable tRNAs receive only 3'-terminal CCA, unstable tRNAs are marked with CCACCA and rapidly degraded. In Legionella pneumophila (strain Paris), this protein is Multifunctional CCA protein.